Consider the following 238-residue polypeptide: Flagellar L-ring protein (238 aa).

The first 16 residues, 1–16 (MNKAILAVAMVLLLAG), serve as a signal peptide directing secretion. Cysteine 17 carries the N-palmitoyl cysteine lipid modification. Cysteine 17 is lipidated: S-diacylglycerol cysteine.

It belongs to the FlgH family. As to quaternary structure, the basal body constitutes a major portion of the flagellar organelle and consists of four rings (L,P,S, and M) mounted on a central rod.

Its subcellular location is the cell outer membrane. It localises to the bacterial flagellum basal body. Its function is as follows. Assembles around the rod to form the L-ring and probably protects the motor/basal body from shearing forces during rotation. This is Flagellar L-ring protein from Brucella canis (strain ATCC 23365 / NCTC 10854 / RM-666).